The sequence spans 189 residues: Isopentenyl-diphosphate Delta-isomerase (189 aa).

The Mn(2+) site is built by His-27 and His-34. Residues 32–171 (PLHFAFSTYI…PFVFSPWMVD (140 aa)) form the Nudix hydrolase domain. Residue Cys-69 is part of the active site. Residue His-71 participates in Mn(2+) binding. Glu-89 is a binding site for Mg(2+). The Mn(2+) site is built by Glu-119 and Glu-121. The active site involves Glu-121.

The protein belongs to the IPP isomerase type 1 family. Requires Mg(2+) as cofactor. Mn(2+) serves as cofactor.

The protein resides in the cytoplasm. It catalyses the reaction isopentenyl diphosphate = dimethylallyl diphosphate. It participates in isoprenoid biosynthesis; dimethylallyl diphosphate biosynthesis; dimethylallyl diphosphate from isopentenyl diphosphate: step 1/1. Functionally, catalyzes the 1,3-allylic rearrangement of the homoallylic substrate isopentenyl (IPP) to its highly electrophilic allylic isomer, dimethylallyl diphosphate (DMAPP). The sequence is that of Isopentenyl-diphosphate Delta-isomerase from Corynebacterium glutamicum (strain R).